A 423-amino-acid polypeptide reads, in one-letter code: Serine--tRNA ligase (423 aa).

231–233 (TAE) lines the L-serine pocket. 262-264 (RSE) serves as a coordination point for ATP. Residue glutamate 285 coordinates L-serine. An ATP-binding site is contributed by 349–352 (EISS). Serine 384 serves as a coordination point for L-serine.

Belongs to the class-II aminoacyl-tRNA synthetase family. Type-1 seryl-tRNA synthetase subfamily. In terms of assembly, homodimer. The tRNA molecule binds across the dimer.

The protein resides in the cytoplasm. It carries out the reaction tRNA(Ser) + L-serine + ATP = L-seryl-tRNA(Ser) + AMP + diphosphate + H(+). It catalyses the reaction tRNA(Sec) + L-serine + ATP = L-seryl-tRNA(Sec) + AMP + diphosphate + H(+). It participates in aminoacyl-tRNA biosynthesis; selenocysteinyl-tRNA(Sec) biosynthesis; L-seryl-tRNA(Sec) from L-serine and tRNA(Sec): step 1/1. Catalyzes the attachment of serine to tRNA(Ser). Is also able to aminoacylate tRNA(Sec) with serine, to form the misacylated tRNA L-seryl-tRNA(Sec), which will be further converted into selenocysteinyl-tRNA(Sec). The polypeptide is Serine--tRNA ligase (Acinetobacter baylyi (strain ATCC 33305 / BD413 / ADP1)).